The chain runs to 488 residues: Transcriptional coactivator YAP1 (488 aa).

Positions 1-21 (MEPAQQPPPQPAPQGPAPPSV) are enriched in pro residues. A disordered region spans residues 1-47 (MEPAQQPPPQPAPQGPAPPSVSPAGTPAAPPAPPAGHQVVHVRGDSE). S46 is subject to Phosphoserine. Position 48 is a phosphothreonine (T48). A coiled-coil region spans residues 71–85 (MRLRKLPDSFFKPPE). K75 is subject to N6-lactoyllysine. Residues 76-99 (LPDSFFKPPEPKSHSRQASTDAGT) form a disordered region. Phosphoserine occurs at positions 90 and 94. At T95 the chain carries Phosphothreonine. Position 104 is a phosphothreonine; by MAPK8 and MAPK9 (T104). A phosphoserine mark is found at S112, S113, S116, and S123. S149 carries the post-translational modification Phosphoserine; by LATS1 and LATS2. WW domains follow at residues 156-189 (VPLP…DPRK) and 215-248 (GPLP…DPRL). 2 disordered regions span residues 261–293 (SAPV…QIQL) and 339–393 (TLEQ…SSYS). Position 274 is a phosphoserine (S274). A transactivation domain region spans residues 276–488 (QGGVLGGGSS…LDKESFLTWL (213 aa)). The stretch at 283–344 (GSSNQQQQIQ…SQLPTLEQDG (62 aa)) forms a coiled coil. Residues 348 to 376 (NAVSSPGMSQELRTMTTNSSDPFLNSGTY) are compositionally biased toward polar residues. Phosphoserine; by MAPK8 and MAPK9 is present on S352. Residues S356, S366, S367, and S373 each carry the phosphoserine modification. Phosphoserine; by LATS1 and LATS2 is present on S382. Over residues 384 to 393 (DSGLSMSSYS) the composition is skewed to polar residues. Phosphoserine; by CK1 is present on residues S385 and S388. Phosphotyrosine; by ABL1 is present on Y392. At T397 the chain carries Phosphothreonine; by MAPK8 and MAPK9.

This sequence belongs to the YAP1 family. As to quaternary structure, part of a complex when phosphorylated that contains DSG3, PKP1, YAP1 and YWHAG; the complex is required for localization of DSG3 and YAP1 to the cell membrane in keratinocytes. Binds to the SH3 domain of the YES kinase. Binds to WBP1 and WBP2. Binds, in vitro, through the WW1 domain, to neural isoforms of ENAH that contain the PPSY motif. The phosphorylated form interacts with YWHAB. Interacts (via WW domains) with LATS1 (via PPxY motif 2). Interacts with LATS2. Interacts (via WW domain 1) with isoform JM-A of ERBB4 (via PPxY motif 2). Interacts with TEAD1, TEAD2 and TEAD3. Interacts with TP73 and HCK. Interacts with RUNX1. Interacts with TEAD4. Interacts (via WW domains) with PTPN14 (via PPxY motif 2); this interaction leads to the cytoplasmic sequestration of YAP1 and inhibits its transcriptional coactivator activity. Interacts (when phosphorylated at Ser-112) with SMAD2, SMAD3 and WWTR1. Interacts with PRRG2 (via cytoplasmic domain). Interacts (via WW domains) with PRRG4 (via cytoplasmic domain). Interacts (phosphorylated) with CLDN18; the interaction sequesters YAP1 away from the nucleus and thereby restricts transcription of YAP1 target genes. Interacts with SMAD1. Interacts with AMOT; the interaction facilitates translocation of YAP1 to the cytoplasm and tight junctions. Interacts with AMOTL2, the interaction is required for ubiquitination of AMOTL2 and localization of YAP1 to tight junctions. Phosphorylated by LATS1 and LATS2; leading to cytoplasmic translocation and inactivation. Phosphorylated by ABL1; leading to YAP1 stabilization, enhanced interaction with TP73 and recruitment onto proapoptotic genes; in response to DNA damage. Phosphorylation at Ser-385 and Ser-388 by CK1 is triggered by previous phosphorylation at Ser-382 by LATS proteins and leads to YAP1 ubiquitination by SCF(beta-TRCP) E3 ubiquitin ligase and subsequent degradation. Phosphorylated at Thr-104, Ser-123, Ser-352 and Thr-397 by MAPK8/JNK1 and MAPK9/JNK2, which is required for the regulation of apoptosis by YAP1. Post-translationally, lactylation by AARS1 promotes nuclear localization and stabilization of YAP1, leading to increased Hippo signaling pathway. Delactylated by SIRT1. In terms of processing, ubiquitinated by SCF(beta-TRCP) E3 ubiquitin ligase. As to expression, isoforms lacking the transactivation domain seen in striatal neurons (at protein level). Ubiquitous. Isoform 2 is expressed at higher levels in the neural tissues. In the embryo, it is expressed in brain, eye, and the maxillary and frontonasal components of the primary palate.

The protein localises to the cytoplasm. Its subcellular location is the nucleus. The protein resides in the cell junction. It localises to the tight junction. It is found in the cell membrane. Transcriptional regulator with dual roles as a coactivator and corepressor. Critical downstream regulatory target in the Hippo signaling pathway, crucial for organ size control and tumor suppression by restricting proliferation and promoting apoptosis. The Hippo signaling pathway core involves a kinase cascade featuring STK3/MST2 and STK4/MST1, along with its regulatory partner SAV1, which phosphorylates and activates LATS1/2 in complex with their regulatory protein, MOB1. This activation leads to the phosphorylation and inactivation of the YAP1 oncoprotein and WWTR1/TAZ. Phosphorylation of YAP1 by LATS1/2 prevents its nuclear translocation, thereby regulating the expression of its target genes. The transcriptional regulation of gene expression requires TEAD transcription factors and modulates cell growth, anchorage-independent growth, and induction of epithelial-mesenchymal transition (EMT). Plays a key role in tissue tension and 3D tissue shape by regulating the cortical actomyosin network, acting via ARHGAP18, a Rho GTPase activating protein that suppresses F-actin polymerization. It also suppresses ciliogenesis by acting as a transcriptional corepressor of TEAD4 target genes AURKA and PLK1. In conjunction with WWTR1, regulates TGFB1-dependent SMAD2 and SMAD3 nuclear accumulation. Synergizes with WBP2 to enhance PGR activity. This chain is Transcriptional coactivator YAP1 (Yap1), found in Mus musculus (Mouse).